The chain runs to 218 residues: Small ribosomal subunit protein uS3 (218 aa).

One can recognise a KH type-2 domain in the interval 38–106; the sequence is IREFISKRLS…RVHINILEIK (69 aa).

This sequence belongs to the universal ribosomal protein uS3 family. As to quaternary structure, part of the 30S ribosomal subunit. Forms a tight complex with proteins S10 and S14.

In terms of biological role, binds the lower part of the 30S subunit head. Binds mRNA in the 70S ribosome, positioning it for translation. This is Small ribosomal subunit protein uS3 from Bacillus pumilus (strain SAFR-032).